Here is a 2266-residue protein sequence, read N- to C-terminus: Little elongation complex subunit 1 (2266 aa).

The stretch at 23 to 186 forms a coiled coil; sequence CASLQQNLNE…KQKNEKELRH (164 aa). Disordered stretches follow at residues 223-259 and 517-540; these read GEGSRCVPEKPAKAITSSRVPGEDGTLPPTQGSPLRT and PAQEKEAAPGKSELCSSPLGKRPL. The segment covering 250–259 has biased composition (polar residues); that stretch reads PPTQGSPLRT. Phosphoserine occurs at positions 255, 533, 558, and 589. The disordered stretch occupies residues 591–623; that stretch reads ELEKEKEDTQGFTLGESPESEDDDSGDGMDVAG. Acidic residues predominate over residues 608–617; it reads PESEDDDSGD. S707 is modified (phosphoserine). T832 is modified (phosphothreonine). The residue at position 925 (S925) is a Phosphoserine. A disordered region spans residues 925–955; the sequence is SPEVSASRRKLDFNSPGGSSPVENSDCSTNS. Polar residues predominate over residues 940–955; the sequence is PGGSSPVENSDCSTNS. S958 is subject to Phosphoserine. 2 disordered regions span residues 977–1001 and 1107–1133; these read VQGDGQKQRQPQATDLDSSGTHGSE and TEVESEAFSCSEGSEQQDAPDDSQKNL. A compositionally biased stretch (polar residues) spans 984-998; sequence QRQPQATDLDSSGTH. Position 1218 is an N6-acetyllysine (K1218). Disordered stretches follow at residues 1295–1372, 1467–1510, and 1543–1707; these read TTEN…PSAL, AEKS…KSRL, and NSKL…SASE. Composition is skewed to polar residues over residues 1306–1319, 1328–1344, 1487–1505, 1565–1588, and 1594–1605; these read RETTGSSSHASEPT, EGSSPISGMPQNENPQS, NNLSCPQEDVSSSGQSTNF, NKPVKTSASSRVETHQSEVAQSFS, and TKTQRSQTQTIL. The residue at position 1588 (S1588) is a Phosphoserine. 2 stretches are compositionally biased toward low complexity: residues 1609–1620 and 1637–1671; these read DTSTPTDCSPDT and APLIATPPRTSQPLSPLISSSSPSSPASPVGQVSP. S1617 carries the phosphoserine modification. The residue at position 1642 (T1642) is a Phosphothreonine. Phosphoserine occurs at positions 1692, 1697, 1699, 1701, 1712, 1838, and 1854. Residues 1809 to 1902 form a disordered region; that stretch reads TGSSSGGDCN…AVSAVSQLPL (94 aa). The span at 1825-1843 shows a compositional bias: polar residues; the sequence is LGTQQDSSGKRTLSTSTLR. Polar residues predominate over residues 1889–1901; sequence CSSPAVSAVSQLP. Residue S1903 is modified to Phosphoserine.

This sequence belongs to the ICE1 family. As to quaternary structure, component of the little elongation complex (LEC), at least composed of ELL (ELL, ELL2 or ELL3), ZC3H8, ICE1 and ICE2. Interacts (via N-terminus domain) with ELL. Interacts (via C-terminus domain) with ICE2 and ZC3H8.

The protein localises to the nucleus. The protein resides in the cajal body. Component of the little elongation complex (LEC), a complex required to regulate small nuclear RNA (snRNA) gene transcription by RNA polymerase II and III. Specifically acts as a scaffold protein that promotes the LEC complex formation and recruitment and RNA polymerase II occupancy at snRNA genes in subnuclear bodies. This is Little elongation complex subunit 1 (ICE1) from Homo sapiens (Human).